A 428-amino-acid polypeptide reads, in one-letter code: Ribulose bisphosphate carboxylase (428 aa).

Lys-151 functions as the Proton acceptor in the catalytic mechanism. Lys-153 is a binding site for substrate. The Mg(2+) site is built by Lys-177, Asp-179, and Glu-180. Residue Lys-177 is modified to N6-carboxylysine. Catalysis depends on His-270, which acts as the Proton acceptor. Substrate contacts are provided by residues Arg-271, His-303, 354–356 (SGG), and 376–379 (QFGG).

The protein belongs to the RuBisCO large chain family. Type III subfamily. In terms of assembly, homodimer or homodecamer. In contrast to form I RuBisCO, the form III RuBisCO is composed solely of large subunits. Mg(2+) is required as a cofactor.

The catalysed reaction is 2 (2R)-3-phosphoglycerate + 2 H(+) = D-ribulose 1,5-bisphosphate + CO2 + H2O. It carries out the reaction D-ribulose 1,5-bisphosphate + O2 = 2-phosphoglycolate + (2R)-3-phosphoglycerate + 2 H(+). Catalyzes the addition of molecular CO(2) and H(2)O to ribulose 1,5-bisphosphate (RuBP), generating two molecules of 3-phosphoglycerate (3-PGA). Functions in an archaeal AMP degradation pathway, together with AMP phosphorylase and R15P isomerase. This chain is Ribulose bisphosphate carboxylase, found in Methanosarcina barkeri (strain Fusaro / DSM 804).